The following is a 478-amino-acid chain: MTLSFVTRWRDELPETYTALSPTPLNNARLIWHNTELANTLSIPSSLFKNGAGVWGGEALLPGMSPLAQVYSGHQFGVWAGQLGDGRGILLGEQLLADGTTMDWHLKGAGLTPYSRMGDGRAVLRSTIRESLASEAMHYLGIPTTRALSIVTSDSPVYRETAEPGAMLMRVAPSHLRFGHFEHFYYRRESEKVRQLADFAIRHYWSHLADDEDKYRLWFSDVVARTASLIAQWQTVGFAHGVMNTDNMSLLGLTLDYGPFGFLDDYEPGFICNHSDHQGRYSFDNQPAVALWNLQRLAQTLSPFVAVDALNEALDSYQQVLLTHYGERMRQKLGFMTEQKEDNALLNELFSLMARERSDYTRTFRMLSLTEQHSAASPLRDEFIDRAAFDDWFARYRGRLQQDEVSDSERQQLMQSVNPALVLRNWLAQRAIEAAEKGDMTELHRLHEALRNPFSDRDDDYVSRPPDWGKRLEVSCSS.

Residues Gly84, Gly86, Arg87, Lys107, Asp119, Gly120, Arg170, and Arg177 each coordinate ATP. The active-site Proton acceptor is Asp246. Mg(2+) is bound by residues Asn247 and Asp256. Residue Asp256 participates in ATP binding.

It belongs to the SELO family. The cofactor is Mg(2+). It depends on Mn(2+) as a cofactor.

It catalyses the reaction L-seryl-[protein] + ATP = 3-O-(5'-adenylyl)-L-seryl-[protein] + diphosphate. The catalysed reaction is L-threonyl-[protein] + ATP = 3-O-(5'-adenylyl)-L-threonyl-[protein] + diphosphate. The enzyme catalyses L-tyrosyl-[protein] + ATP = O-(5'-adenylyl)-L-tyrosyl-[protein] + diphosphate. It carries out the reaction L-histidyl-[protein] + UTP = N(tele)-(5'-uridylyl)-L-histidyl-[protein] + diphosphate. It catalyses the reaction L-seryl-[protein] + UTP = O-(5'-uridylyl)-L-seryl-[protein] + diphosphate. The catalysed reaction is L-tyrosyl-[protein] + UTP = O-(5'-uridylyl)-L-tyrosyl-[protein] + diphosphate. Functionally, nucleotidyltransferase involved in the post-translational modification of proteins. It can catalyze the addition of adenosine monophosphate (AMP) or uridine monophosphate (UMP) to a protein, resulting in modifications known as AMPylation and UMPylation. This chain is Protein nucleotidyltransferase YdiU, found in Escherichia coli (strain K12 / MC4100 / BW2952).